We begin with the raw amino-acid sequence, 159 residues long: Keratin-associated protein 6-2 (159 aa).

Residues 11 to 147 (GYGCGYGSGY…SYYRSGCCGY (137 aa)) are 66 X 2 AA repeats of G-[YCGS].

It belongs to the KRTAP type 6 family. As to quaternary structure, interacts with hair keratins. In terms of tissue distribution, expressed in skin during two hair growth cycles. Expression restricted to the cortical cells of hair follicles, appearing first in the cortical cells processing the flat nuclei located a few cells above the dermal papilla.

Its function is as follows. In the hair cortex, hair keratin intermediate filaments are embedded in an interfilamentous matrix, consisting of hair keratin-associated proteins (KRTAP), which are essential for the formation of a rigid and resistant hair shaft through their extensive disulfide bond cross-linking with abundant cysteine residues of hair keratins. The matrix proteins include the high-sulfur and high-glycine-tyrosine keratins. The polypeptide is Keratin-associated protein 6-2 (Mus musculus (Mouse)).